A 205-amino-acid chain; its full sequence is Large ribosomal subunit protein uL4 (205 aa).

It belongs to the universal ribosomal protein uL4 family. In terms of assembly, part of the 50S ribosomal subunit.

Its function is as follows. One of the primary rRNA binding proteins, this protein initially binds near the 5'-end of the 23S rRNA. It is important during the early stages of 50S assembly. It makes multiple contacts with different domains of the 23S rRNA in the assembled 50S subunit and ribosome. Forms part of the polypeptide exit tunnel. The sequence is that of Large ribosomal subunit protein uL4 from Ruegeria sp. (strain TM1040) (Silicibacter sp.).